The sequence spans 199 residues: uncharacterized protein (199 aa).

A run of 4 helical transmembrane segments spans residues 41–61 (LFIP…AFIC), 72–92 (SLIC…CSPW), 109–129 (TVWV…SIFV), and 145–165 (VTYS…LLNL).

To M.pneumoniae MPN_037.

It localises to the cell membrane. This is an uncharacterized protein from Mycoplasma pneumoniae (strain ATCC 29342 / M129 / Subtype 1) (Mycoplasmoides pneumoniae).